The following is a 207-amino-acid chain: Small ribosomal subunit protein uS4 (207 aa).

The tract at residues threonine 20 to aspartate 45 is disordered. The S4 RNA-binding domain occupies methionine 93–glycine 158.

This sequence belongs to the universal ribosomal protein uS4 family. As to quaternary structure, part of the 30S ribosomal subunit. Contacts protein S5. The interaction surface between S4 and S5 is involved in control of translational fidelity.

Functionally, one of the primary rRNA binding proteins, it binds directly to 16S rRNA where it nucleates assembly of the body of the 30S subunit. With S5 and S12 plays an important role in translational accuracy. This chain is Small ribosomal subunit protein uS4, found in Leifsonia xyli subsp. xyli (strain CTCB07).